We begin with the raw amino-acid sequence, 294 residues long: Elongation factor Ts (294 aa).

Residues 82-85 (TDFV) are involved in Mg(2+) ion dislocation from EF-Tu.

This sequence belongs to the EF-Ts family.

It localises to the cytoplasm. Functionally, associates with the EF-Tu.GDP complex and induces the exchange of GDP to GTP. It remains bound to the aminoacyl-tRNA.EF-Tu.GTP complex up to the GTP hydrolysis stage on the ribosome. The protein is Elongation factor Ts of Psychrobacter arcticus (strain DSM 17307 / VKM B-2377 / 273-4).